Consider the following 364-residue polypeptide: UDP-N-acetylglucosamine--N-acetylmuramyl-(pentapeptide) pyrophosphoryl-undecaprenol N-acetylglucosamine transferase (364 aa).

Residues threonine 10–glycine 12, asparagine 124, arginine 161, serine 195, and glutamine 291 contribute to the UDP-N-acetyl-alpha-D-glucosamine site.

Belongs to the glycosyltransferase 28 family. MurG subfamily.

It localises to the cell membrane. It carries out the reaction di-trans,octa-cis-undecaprenyl diphospho-N-acetyl-alpha-D-muramoyl-L-alanyl-D-glutamyl-meso-2,6-diaminopimeloyl-D-alanyl-D-alanine + UDP-N-acetyl-alpha-D-glucosamine = di-trans,octa-cis-undecaprenyl diphospho-[N-acetyl-alpha-D-glucosaminyl-(1-&gt;4)]-N-acetyl-alpha-D-muramoyl-L-alanyl-D-glutamyl-meso-2,6-diaminopimeloyl-D-alanyl-D-alanine + UDP + H(+). It participates in cell wall biogenesis; peptidoglycan biosynthesis. Cell wall formation. Catalyzes the transfer of a GlcNAc subunit on undecaprenyl-pyrophosphoryl-MurNAc-pentapeptide (lipid intermediate I) to form undecaprenyl-pyrophosphoryl-MurNAc-(pentapeptide)GlcNAc (lipid intermediate II). The chain is UDP-N-acetylglucosamine--N-acetylmuramyl-(pentapeptide) pyrophosphoryl-undecaprenol N-acetylglucosamine transferase from Streptomyces coelicolor (strain ATCC BAA-471 / A3(2) / M145).